The primary structure comprises 357 residues: Protein pelota homolog (357 aa).

The protein belongs to the eukaryotic release factor 1 family. Pelota subfamily. As to quaternary structure, monomer. The cofactor is a divalent metal cation.

It localises to the cytoplasm. May function in recognizing stalled ribosomes, interact with stem-loop structures in stalled mRNA molecules, and effect endonucleolytic cleavage of the mRNA. May play a role in the release non-functional ribosomes and degradation of damaged mRNAs. Has endoribonuclease activity. In Thermococcus gammatolerans (strain DSM 15229 / JCM 11827 / EJ3), this protein is Protein pelota homolog.